The following is a 675-amino-acid chain: Transketolase, chloroplastic (675 aa).

Residues His78 and 127–129 contribute to the thiamine diphosphate site; that span reads GPL. Asp168 lines the Mg(2+) pocket. Thiamine diphosphate is bound by residues Gly169, Glu173, and Asn198. Residues Asn198 and Ile200 each contribute to the Mg(2+) site. His275 provides a ligand contact to thiamine diphosphate. Substrate-binding residues include His275, Arg369, and Ser396. Residues Glu423 and 450-453 contribute to the thiamine diphosphate site; that span reads FTDY. Catalysis depends on Glu423, which acts as the Proton donor. Residues His474, Asp482, and Arg533 each coordinate substrate.

As to quaternary structure, homodimer. Requires Mg(2+) as cofactor. Ca(2+) serves as cofactor. It depends on Mn(2+) as a cofactor. The cofactor is Co(2+). Thiamine diphosphate is required as a cofactor.

It localises to the plastid. The protein localises to the chloroplast thylakoid membrane. It catalyses the reaction D-sedoheptulose 7-phosphate + D-glyceraldehyde 3-phosphate = aldehydo-D-ribose 5-phosphate + D-xylulose 5-phosphate. It participates in carbohydrate biosynthesis; Calvin cycle. Its function is as follows. Catalyzes the reversible transfer of a two-carbon ketol group from fructose-6-phosphate or sedoheptulose-7-phosphate to glyceraldehyde-3-phosphate to yield xylulose-5-phosphate and erythrose-4-phosphate or ribose-5-phosphate, respectively. This chain is Transketolase, chloroplastic, found in Zea mays (Maize).